A 1651-amino-acid polypeptide reads, in one-letter code: Putative serine/threonine-protein kinase/receptor R818 (1651 aa).

Positions 1-19 (MKSIGIFVVALWLTHFCDG) are cleaved as a signal peptide. Residues Asn-111, Asn-135, Asn-190, Asn-236, Asn-275, Asn-276, Asn-287, Asn-452, Asn-455, Asn-477, Asn-495, Asn-540, Asn-596, and Asn-722 are each glycosylated (N-linked (GlcNAc...) asparagine; by host). A helical membrane pass occupies residues 749 to 769 (IILAIVIPVSFVICCIIIVLV). Residues 793 to 1057 (LDFMESLGSG…EIMTKLSTLI (265 aa)) form the Protein kinase 1 domain. ATP-binding positions include 799–807 (LGSGGSGEV) and Lys-820. The active-site Proton acceptor is Asp-915. The disordered stretch occupies residues 1089 to 1115 (IHNNDETKNSFGSTTYGSNTISSSSNT). The span at 1100-1115 (GSTTYGSNTISSSSNT) shows a compositional bias: low complexity. A Guanylate cyclase domain is found at 1135-1278 (IIVFTDIISA…VTVNIAAKIT (144 aa)). The 252-residue stretch at 1394 to 1645 (IQIGKQIGVG…DVIMGLNDML (252 aa)) folds into the Protein kinase 2 domain. Residues 1400 to 1408 (IGVGSYGIV) and Lys-1421 contribute to the ATP site. Asp-1515 serves as the catalytic Proton acceptor.

The protein localises to the membrane. The enzyme catalyses L-seryl-[protein] + ATP = O-phospho-L-seryl-[protein] + ADP + H(+). It carries out the reaction L-threonyl-[protein] + ATP = O-phospho-L-threonyl-[protein] + ADP + H(+). The protein is Putative serine/threonine-protein kinase/receptor R818 of Acanthamoeba polyphaga mimivirus (APMV).